The primary structure comprises 555 residues: Bifunctional epoxide hydrolase 2 (555 aa).

The interval 1-224 is phosphatase; it reads MALRAAVFDL…KVTGVQLLQT (224 aa). The Mg(2+) site is built by Asp-9 and Asp-11. Lys-43 carries the post-translational modification N6-acetyllysine. 123–124 lines the phosphate pocket; that stretch reads TN. Mg(2+) is bound at residue Asp-185. N6-acetyllysine occurs at positions 191 and 215. Positions 235–555 are epoxide hydrolase; sequence SALSHGYVLI…ARNPLVDSKL (321 aa). The region spanning 259-531 is the AB hydrolase-1 domain; it reads PAVCLCHGFP…CGHWTQIDKP (273 aa). The active-site Nucleophile is the Asp-335. Ser-370 carries the post-translational modification Phosphoserine. A substrate-binding site is contributed by Tyr-383. Lys-455 carries the N6-succinyllysine modification. The active-site Proton donor is Tyr-466. Position 505 is an N6-succinyllysine (Lys-505). Residue Cys-522 is the site of S-(15-deoxy-Delta12,14-prostaglandin J2-9-yl)cysteine attachment. His-524 acts as the Proton acceptor in catalysis. A Microbody targeting signal motif is present at residues 553-555; sequence SKL. Lys-554 is modified (N6-succinyllysine).

It belongs to the AB hydrolase superfamily. Epoxide hydrolase family. In terms of assembly, homodimer. Requires Mg(2+) as cofactor. The covalent modification of cysteine by 15-deoxy-Delta12,14-prostaglandin-J2 is autocatalytic and reversible. It may occur as an alternative to other cysteine modifications, such as S-nitrosylation and S-palmitoylation.

The protein localises to the cytoplasm. The protein resides in the peroxisome. The catalysed reaction is an epoxide + H2O = an ethanediol. The enzyme catalyses (9S,10S)-10-hydroxy-9-(phosphooxy)octadecanoate + H2O = (9S,10S)-9,10-dihydroxyoctadecanoate + phosphate. It catalyses the reaction (14R,15S)-epoxy-(5Z,8Z,11Z)-eicosatrienoate + H2O = (14R,15R)-dihydroxy-(5Z,8Z,11Z)-eicosatrienoate. Its activity is regulated as follows. Inhibited by 1-(1-acetylpiperidin-4-yl)-3-(4-(trifl uoromethoxy)phenyl)urea (TPAU), 1-cyclohexyl-3-dodecylurea (CDU), 12-(3-adamantan-1-yl-ureido)-dodecanoic acid (AUDA), 1-((3S, 5S, 7S)-adamantan-1-yl)-3-(5-(2-(2-ethoxyethoxy) ethoxy)pentyl)urea (AEPU), N-adamantyl-N[']-cyclohexyl urea (ACU), 4-(((1S, 4S)-4-(3-((3S, 5S, 7S)-adamantan-1-yl) ureido)cyclohexyl)oxy)benzoic acid (c-AUCB), 4-(((1R, 4R)-4-(3-((3S, 5S, 7S)-adamantan-1-yl)ureido)cyclohexyl)oxy)benzoic acid (t-AUCB), 4-(((1R, 4R)-4-(3-(4(trifluoromethoxy)phenyl)ureido)cyclohexyl)oxy)benzoic acid (t-TAUCB) and to a lesser extent by 8-(3-((3S, 5S, 7S)-adamantan-1-yl)ureido) octanoic acid (AUOA). Functionally, bifunctional enzyme. The C-terminal domain has epoxide hydrolase activity and acts on epoxides (alkene oxides, oxiranes) and arene oxides. Plays a role in xenobiotic metabolism by degrading potentially toxic epoxides. Also determines steady-state levels of physiological mediators. The N-terminal domain has lipid phosphatase activity, with the highest activity towards threo-9,10-phosphonooxy-hydroxy-octadecanoic acid, followed by erythro-9,10-phosphonooxy-hydroxy-octadecanoic acid, 12-phosphonooxy-octadec-9Z-enoic acid and 12-phosphonooxy-octadec-9E-enoic acid. In Sus scrofa (Pig), this protein is Bifunctional epoxide hydrolase 2 (EPHX2).